An 80-amino-acid chain; its full sequence is RNA-binding protein Hfq (80 aa).

The Sm domain maps to 10 to 70 (DIFLNNARKE…ISTVSPAKPI (61 aa)).

The protein belongs to the Hfq family. In terms of assembly, homohexamer.

Its function is as follows. RNA chaperone that binds small regulatory RNA (sRNAs) and mRNAs to facilitate mRNA translational regulation in response to envelope stress, environmental stress and changes in metabolite concentrations. Also binds with high specificity to tRNAs. The polypeptide is RNA-binding protein Hfq (Clostridium perfringens (strain SM101 / Type A)).